Consider the following 468-residue polypeptide: Glutamyl-tRNA reductase (468 aa).

Residues 49–52 (TCNR), Ser109, 114–116 (EQQ), and Gln120 each bind substrate. Cys50 acts as the Nucleophile in catalysis. Residue 189–194 (GAGAMG) coordinates NADP(+). Residues 443-468 (VPSGFDAESRRGGGDMQSSPKRSPSN) form a disordered region. Over residues 458–468 (MQSSPKRSPSN) the composition is skewed to polar residues.

Belongs to the glutamyl-tRNA reductase family. In terms of assembly, homodimer.

The catalysed reaction is (S)-4-amino-5-oxopentanoate + tRNA(Glu) + NADP(+) = L-glutamyl-tRNA(Glu) + NADPH + H(+). The protein operates within porphyrin-containing compound metabolism; protoporphyrin-IX biosynthesis; 5-aminolevulinate from L-glutamyl-tRNA(Glu): step 1/2. Its function is as follows. Catalyzes the NADPH-dependent reduction of glutamyl-tRNA(Glu) to glutamate 1-semialdehyde (GSA). This Mycobacterium tuberculosis (strain ATCC 25177 / H37Ra) protein is Glutamyl-tRNA reductase.